We begin with the raw amino-acid sequence, 467 residues long: Zinc finger protein ZIC 3 (467 aa).

Residues 66-107 are disordered; that stretch reads LSSGQSSAFTPQGSGYANALGHHHHHHHHHHHTSQVPSYGGA. Over residues 67–80 the composition is skewed to polar residues; sequence SSGQSSAFTPQGSG. Residues 86 to 98 are compositionally biased toward basic residues; sequence GHHHHHHHHHHHT. Lysine 248 is covalently cross-linked (Glycyl lysine isopeptide (Lys-Gly) (interchain with G-Cter in SUMO2)). Residues 251-286 form a C2H2-type 1; atypical zinc finger; the sequence is LSCKWIDEAQLSRPKKSCDRTFSTMHELVTHVTMEH. The C2H2-type 2; atypical zinc finger occupies 295–322; it reads HVCYWEECPREGKSFKAKYKLVNHIRVH. Short sequence motifs (nuclear localization signal) lie at residues 297–322 and 330–352; these read CYWE…IRVH and CPFP…KRTH. C2H2-type zinc fingers lie at residues 328 to 352, 358 to 382, and 388 to 410; these read FPCP…KRTH, FKCE…MHVH, and YICK…MKVH. Positions 404-467 are disordered; the sequence is RKHMKVHESQ…LPPNFNEWYV (64 aa). Residues 412–428 show a composition bias toward low complexity; sequence SQGSDSSPAASSGYESS. Residues 435 to 455 are compositionally biased toward polar residues; that stretch reads SANSKDTTKTPSAVQTSTSHN.

This sequence belongs to the GLI C2H2-type zinc-finger protein family. In terms of assembly, interacts (via the C2H2-type domains 3, 4 and 5) with MDFIC (via the C2H2-type domains 3, 4 and 5); the interaction reduces its transcriptional activity. Interacts with KPNA1 and KPNA6. Interacts (via C2H2-type domains 3, 4 and 5) with GLI3; the interaction enhances its transcriptional activity.

The protein localises to the nucleus. The protein resides in the cytoplasm. Acts as a transcriptional activator. Required in the earliest stages in both axial midline development and left-right (LR) asymmetry specification. Binds to the minimal GLI-consensus sequence 5'-GGGTGGTC-3'. The sequence is that of Zinc finger protein ZIC 3 (ZIC3) from Homo sapiens (Human).